Here is a 193-residue protein sequence, read N- to C-terminus: Holliday junction branch migration complex subunit RuvA (193 aa).

The interval 1–64 (MIGRIAGTLI…EDAHLLYGFG (64 aa)) is domain I. The domain II stretch occupies residues 65-143 (TASERNTFRE…AELGHVPGTP (79 aa)). The segment at 144–151 (AVPDSAVD) is flexible linker. Residues 151–193 (DVLNALLALGYSEKEAAAAIKQVPAGTGVSDGIKLALKALSKA) form a domain III region.

The protein belongs to the RuvA family. In terms of assembly, homotetramer. Forms an RuvA(8)-RuvB(12)-Holliday junction (HJ) complex. HJ DNA is sandwiched between 2 RuvA tetramers; dsDNA enters through RuvA and exits via RuvB. An RuvB hexamer assembles on each DNA strand where it exits the tetramer. Each RuvB hexamer is contacted by two RuvA subunits (via domain III) on 2 adjacent RuvB subunits; this complex drives branch migration. In the full resolvosome a probable DNA-RuvA(4)-RuvB(12)-RuvC(2) complex forms which resolves the HJ.

Its subcellular location is the cytoplasm. In terms of biological role, the RuvA-RuvB-RuvC complex processes Holliday junction (HJ) DNA during genetic recombination and DNA repair, while the RuvA-RuvB complex plays an important role in the rescue of blocked DNA replication forks via replication fork reversal (RFR). RuvA specifically binds to HJ cruciform DNA, conferring on it an open structure. The RuvB hexamer acts as an ATP-dependent pump, pulling dsDNA into and through the RuvAB complex. HJ branch migration allows RuvC to scan DNA until it finds its consensus sequence, where it cleaves and resolves the cruciform DNA. The sequence is that of Holliday junction branch migration complex subunit RuvA from Cupriavidus necator (strain ATCC 17699 / DSM 428 / KCTC 22496 / NCIMB 10442 / H16 / Stanier 337) (Ralstonia eutropha).